A 690-amino-acid chain; its full sequence is Signal peptide peptidase-like 2C (690 aa).

An N-terminal signal peptide occupies residues 1 to 28 (MACLGSLHPLGSLLLLFLLLLLSPEARG). Residues 29–192 (EYGLVRVVSK…APLEPVTDYN (164 aa)) are Lumenal-facing. The PA domain maps to 87 to 166 (DSSPRQRPLH…AVLRYTDMLD (80 aa)). Residue N106 is glycosylated (N-linked (GlcNAc...) asparagine). A helical membrane pass occupies residues 193–213 (MAIIFILAVGTVAAGGYWAGL). The Cytoplasmic segment spans residues 214 to 260 (MEANKLQRRQAQRGGGLGGHNQQQTVAAERSQRAWEDDDFEDAPMDF). The chain crosses the membrane as a helical span at residues 261-283 (TPAMTGAVVTMSCSIMILLYFFY). Position 284 (D284) is a topological domain, lumenal. A helical membrane pass occupies residues 285-307 (CFVYVMIGIFSLGASTGLYSCLA). Residues 308 to 328 (PILCHLPLWRYQWVLPGQRVS) are Cytoplasmic-facing. The helical transmembrane segment at 329–349 (VTWPLLLLAGLCAMVTVLWVI) threads the bilayer. At 350 to 354 (HRNED) the chain is on the lumenal side. The chain crosses the membrane as a helical span at residues 355 to 373 (HWAWLLQDTLGVAYCLFVL). Over 374-384 (RRVRLPTFKNC) the chain is Cytoplasmic. The chain crosses the membrane as a helical span at residues 385–405 (TLFLLALLAFDVFFVFITPLF). D395 is an active-site residue. Residues 406–448 (TKTGESIMVEVASGPADSSSHERLPMVLKVPRLSFSALTLCNQ) lie on the Lumenal side of the membrane. A helical membrane pass occupies residues 449–469 (PFSILGFGDIVVPGFLVAYCH). The active site involves D457. Over 470–482 (RFDMQVQSRQVYY) the chain is Cytoplasmic. A helical transmembrane segment spans residues 483-503 (MACTVAYAVGLLVTFVAMILM). Q504 is a topological domain (lumenal). The chain crosses the membrane as a helical span at residues 505–525 (MGQPALLYLVSSTLLTSLAVA). The PAL motif lies at 508 to 510 (PAL). Topologically, residues 526-690 (TCRQEFTLFW…KKSMSAQAPL (165 aa)) are cytoplasmic. Basic and acidic residues predominate over residues 564 to 573 (EDAKDSRTTN). A disordered region spans residues 564–633 (EDAKDSRTTN…DPNELPSGSP (70 aa)). Polar residues predominate over residues 615 to 624 (SEGWSDTNLD).

Belongs to the peptidase A22B family. As to quaternary structure, interacts (via active sites) with FREY; the interaction stabilizes FREY1 protein and inhibits SPPL2C proteolytic activity. Post-translationally, glycosylated. Highly expressed in testis where it is primarily localised in spermatids (at protein level).

It localises to the endoplasmic reticulum membrane. Its function is as follows. Sperm-specific intramembrane-cleaving aspartic protease (I-CLiP) that cleaves distinct tail-anchored proteins and SNARE proteins. In elongated spermatids, modulates intracellular Ca(2+) homeostasis by controlling PLN abundance through proteolytic cleavage. During spermatogenesis, processes SNARE proteins and impacts vesicular trafficking which supports compartmental reorganization in maturating spermatids and may play a role in formation of the acrosome. Functionally, in round spermatids, acts as a scaffold protein supporting FREY1 in IZUMO1 recruitment at the endoplasmic reticulum membrane and coordination of IZUMO1 complex assembly. Stabilizes FREY1 at the endoplasmic reticulum membrane through interaction. May recruit IZUMO1 interaction partners. No difference in cleavage specificity compared to isoform 1. The sequence is that of Signal peptide peptidase-like 2C from Mus musculus (Mouse).